A 264-amino-acid chain; its full sequence is S-adenosylmethionine decarboxylase proenzyme (264 aa).

Ser113 serves as the catalytic Schiff-base intermediate with substrate; via pyruvic acid. At Ser113 the chain carries Pyruvic acid (Ser); by autocatalysis. Residue His118 is the Proton acceptor; for processing activity of the active site. The Proton donor; for catalytic activity role is filled by Cys141.

The protein belongs to the prokaryotic AdoMetDC family. Type 2 subfamily. Heterooctamer of four alpha and four beta chains arranged as a tetramer of alpha/beta heterodimers. The cofactor is pyruvate. Is synthesized initially as an inactive proenzyme. Formation of the active enzyme involves a self-maturation process in which the active site pyruvoyl group is generated from an internal serine residue via an autocatalytic post-translational modification. Two non-identical subunits are generated from the proenzyme in this reaction, and the pyruvate is formed at the N-terminus of the alpha chain, which is derived from the carboxyl end of the proenzyme. The post-translation cleavage follows an unusual pathway, termed non-hydrolytic serinolysis, in which the side chain hydroxyl group of the serine supplies its oxygen atom to form the C-terminus of the beta chain, while the remainder of the serine residue undergoes an oxidative deamination to produce ammonia and the pyruvoyl group blocking the N-terminus of the alpha chain.

The catalysed reaction is S-adenosyl-L-methionine + H(+) = S-adenosyl 3-(methylsulfanyl)propylamine + CO2. Its pathway is amine and polyamine biosynthesis; S-adenosylmethioninamine biosynthesis; S-adenosylmethioninamine from S-adenosyl-L-methionine: step 1/1. Functionally, catalyzes the decarboxylation of S-adenosylmethionine to S-adenosylmethioninamine (dcAdoMet), the propylamine donor required for the synthesis of the polyamines spermine and spermidine from the diamine putrescine. The sequence is that of S-adenosylmethionine decarboxylase proenzyme from Pseudomonas aeruginosa (strain UCBPP-PA14).